The primary structure comprises 122 residues: Small ribosomal subunit protein uS13 (122 aa).

The interval 94–122 (KQLPVRGQRTHTNARTRKGKAKPIAGKKK) is disordered.

It belongs to the universal ribosomal protein uS13 family. Part of the 30S ribosomal subunit. Forms a loose heterodimer with protein S19. Forms two bridges to the 50S subunit in the 70S ribosome.

Functionally, located at the top of the head of the 30S subunit, it contacts several helices of the 16S rRNA. In the 70S ribosome it contacts the 23S rRNA (bridge B1a) and protein L5 of the 50S subunit (bridge B1b), connecting the 2 subunits; these bridges are implicated in subunit movement. Contacts the tRNAs in the A and P-sites. The sequence is that of Small ribosomal subunit protein uS13 from Methylorubrum extorquens (strain PA1) (Methylobacterium extorquens).